The chain runs to 59 residues: Chromatin protein Cren7 (59 aa).

It belongs to the Cren7 family. Monomer. Post-translationally, methylated at multiple sites, to varying extents.

The protein localises to the chromosome. It localises to the cytoplasm. A chromatin protein, binds double-stranded DNA without sequence specificity. Constrains negative DNA supercoils. The polypeptide is Chromatin protein Cren7 (Pyrobaculum neutrophilum (strain DSM 2338 / JCM 9278 / NBRC 100436 / V24Sta) (Thermoproteus neutrophilus)).